Reading from the N-terminus, the 329-residue chain is Ribosomal protein L11 methyltransferase (329 aa).

S-adenosyl-L-methionine-binding residues include threonine 177, glycine 198, aspartate 220, and asparagine 264.

It belongs to the methyltransferase superfamily. PrmA family.

It localises to the cytoplasm. The enzyme catalyses L-lysyl-[protein] + 3 S-adenosyl-L-methionine = N(6),N(6),N(6)-trimethyl-L-lysyl-[protein] + 3 S-adenosyl-L-homocysteine + 3 H(+). Methylates ribosomal protein L11. The chain is Ribosomal protein L11 methyltransferase from Helicobacter pylori (strain J99 / ATCC 700824) (Campylobacter pylori J99).